A 517-amino-acid chain; its full sequence is MFS efflux transporter inpD (517 aa).

The tract at residues 1 to 24 is disordered; that stretch reads MEKTQTPSLTPDELSARSSTPFEE. A run of 5 helical transmembrane segments spans residues 37–57, 59–79, 89–109, 112–132, and 151–171; these read LKFS…ALSL, DIGW…LVFG, IVYL…ATAP, IALI…LSGA, and ILGA…GGII. An N-linked (GlcNAc...) asparagine glycan is attached at Asn172. The next 9 helical transmembrane spans lie at 178–198, 219–239, 247–267, 292–312, 328–348, 352–372, 381–401, 412–432, and 485–505; these read WIFY…VFLL, LPAF…LLWG, NARI…FMLV, FFSF…PIWL, LPII…TPVI, VPFM…LSTL, VLGF…QTLV, IPIG…IALS, and AIVK…IGVL.

It belongs to the major facilitator superfamily.

It localises to the cell membrane. Functionally, MFS efflux transporter; part of the inp gene cluster that mediates the biosynthesis of fellutamide B, a mycotoxin that acts as a proteasome inhibitor. In the first step of fellutabmide B biosynthesis inpC activates 3-hydroxydodecanoic acid to generate 3-hydroxydodecanoyl-AMP that is then loaded onto the T0 domain of inpB. The 3-hydroxydodecanoyl-S-phosphopantetheinyl-T0 is sequentially extended with L-Asn and L-Gln by the two CAT modules of inpB. The linear lipodipeptide from inpB is then transferred onto inpA for the addition of the third amino acid, L-Leu. Reductive releasing of the lipotripeptide by the TE domain of inpA produces (2S)-fellutamide B. InpF might be involved in the release and transfer of the lipodipeptide from inpB to inpA. The inp cluster-encoded proteasome subunit inpE confers resistance to internally produced fellutamides. The MFS efflux transporter inpD may contribute to fellutamide resistance as well. In Emericella nidulans (strain FGSC A4 / ATCC 38163 / CBS 112.46 / NRRL 194 / M139) (Aspergillus nidulans), this protein is MFS efflux transporter inpD.